Here is an 812-residue protein sequence, read N- to C-terminus: INO80 complex subunit D (812 aa).

Disordered stretches follow at residues 521 to 573 (NSRK…LCMP) and 581 to 600 (EVSSIRSPSTPNLSTEELPD). The span at 524–558 (KVQHHQQRKPRKKTKPPALTKKTKKKRRRGPRRPQ) shows a compositional bias: basic residues. Over residues 585–595 (IRSPSTPNLST) the composition is skewed to polar residues.

This sequence belongs to the INO80D family. As to quaternary structure, component of the chromatin-remodeling INO80 complex.

It localises to the nucleus. In terms of biological role, putative regulatory component of the chromatin remodeling INO80 complex which is involved in transcriptional regulation, DNA replication and probably DNA repair. In Xenopus laevis (African clawed frog), this protein is INO80 complex subunit D.